Here is a 178-residue protein sequence, read N- to C-terminus: Photosystem I assembly protein Ycf4 (178 aa).

A run of 2 helical transmembrane segments spans residues 19–39 (FLVAAAVSVGGVGFLLASLSS) and 61–81 (LVMGLYSIAAALLASYLWYVI).

This sequence belongs to the Ycf4 family.

It is found in the cellular thylakoid membrane. Functionally, seems to be required for the assembly of the photosystem I complex. This chain is Photosystem I assembly protein Ycf4, found in Synechococcus sp. (strain CC9902).